Reading from the N-terminus, the 197-residue chain is Phospholipid hydroperoxide glutathione peroxidase (197 aa).

S40 carries the phosphoserine modification. Residue U73 is part of the active site. Residue U73 is a non-standard amino acid, selenocysteine.

The protein belongs to the glutathione peroxidase family. As to quaternary structure, monomer. Has a tendency to form higher mass oligomers. Interacts with FUNDC1; this interaction promotes GPX4 recruitment into mitochondria through TOM/TIM complex where it is degraded by mitophagy.

Its subcellular location is the mitochondrion. The protein resides in the cytoplasm. It carries out the reaction a hydroperoxy polyunsaturated fatty acid + 2 glutathione = a hydroxy polyunsaturated fatty acid + glutathione disulfide + H2O. The enzyme catalyses 2 glutathione + H2O2 = glutathione disulfide + 2 H2O. It catalyses the reaction tert-butyl hydroperoxide + 2 glutathione = tert-butanol + glutathione disulfide + H2O. The catalysed reaction is cumene hydroperoxide + 2 glutathione = 2-phenylpropan-2-ol + glutathione disulfide + H2O. It carries out the reaction (9S)-hydroperoxy-(10E,12Z)-octadecadienoate + 2 glutathione = (9S)-hydroxy-(10E,12Z)-octadecadienoate + glutathione disulfide + H2O. The enzyme catalyses (13S)-hydroperoxy-(9Z,11E)-octadecadienoate + 2 glutathione = (13S)-hydroxy-(9Z,11E)-octadecadienoate + glutathione disulfide + H2O. It catalyses the reaction (5S)-hydroperoxy-(6E,8Z,11Z,14Z)-eicosatetraenoate + 2 glutathione = (5S)-hydroxy-(6E,8Z,11Z,14Z)-eicosatetraenoate + glutathione disulfide + H2O. The catalysed reaction is (12R)-hydroperoxy-(5Z,8Z,10E,14Z)-eicosatetraenoate + 2 glutathione = (12R)-hydroxy-(5Z,8Z,10E,14Z)-eicosatetraenoate + glutathione disulfide + H2O. It carries out the reaction (12S)-hydroperoxy-(5Z,8Z,10E,14Z)-eicosatetraenoate + 2 glutathione = (12S)-hydroxy-(5Z,8Z,10E,14Z)-eicosatetraenoate + glutathione disulfide + H2O. The enzyme catalyses (15S)-hydroperoxy-(5Z,8Z,11Z,13E)-eicosatetraenoate + 2 glutathione = (15S)-hydroxy-(5Z,8Z,11Z,13E)-eicosatetraenoate + glutathione disulfide + H2O. It catalyses the reaction (5S)-hydroperoxy-(6E,8Z,11Z,14Z,17Z)-eicosapentaenoate + 2 glutathione = (5S)-hydroxy-(6E,8Z,11Z,14Z,17Z)-eicosapentaenoate + glutathione disulfide + H2O. The catalysed reaction is (12S)-hydroperoxy-(5Z,8Z,10E,14Z,17Z)-eicosapentaenoate + 2 glutathione = (12S)-hydroxy-(5Z,8Z,10E,14Z,17Z)-eicosapentaenoate + glutathione disulfide + H2O. It carries out the reaction (15S)-hydroperoxy-(5Z,8Z,11Z,13E,17Z)-eicosapentaenoate + 2 glutathione = (15S)-hydroxy-(5Z,8Z,11Z,13E,17Z)-eicosapentaenoate + glutathione disulfide + H2O. The enzyme catalyses (15S)-hydroperoxy-(11Z,13E)-eicosadienoate + 2 glutathione = (15S)-hydroxy-(11Z,13E)-eicosadienoate + glutathione disulfide + H2O. It catalyses the reaction (17S)-hydroperoxy-(4Z,7Z,10Z,13Z,15E,19Z)-docosahexaenoate + 2 glutathione = (17S)-hydroxy-(4Z,7Z,10Z,13Z,15E,19Z)-docosahexaenoate + glutathione disulfide + H2O. The catalysed reaction is a hydroperoxy-1,2-diacyl-glycero-3-phosphocholine + 2 glutathione = a hydroxy-1,2-diacyl-glycero-3-phosphocholine + glutathione disulfide + H2O. Its function is as follows. Essential antioxidant peroxidase that directly reduces phospholipid hydroperoxide even if they are incorporated in membranes and lipoproteins. Can also reduce fatty acid hydroperoxide, cholesterol hydroperoxide and thymine hydroperoxide. Plays a key role in protecting cells from oxidative damage by preventing membrane lipid peroxidation. Required to prevent cells from ferroptosis, a non-apoptotic cell death resulting from an iron-dependent accumulation of lipid reactive oxygen species. The presence of selenocysteine (Sec) versus Cys at the active site is essential for life: it provides resistance to overoxidation and prevents cells against ferroptosis. The presence of Sec at the active site is also essential for the survival of a specific type of parvalbumin-positive interneurons, thereby preventing against fatal epileptic seizures. May be required to protect cells from the toxicity of ingested lipid hydroperoxides. Required for normal sperm development and male fertility. Essential for maturation and survival of photoreceptor cells. Plays a role in a primary T-cell response to viral and parasitic infection by protecting T-cells from ferroptosis and by supporting T-cell expansion. Plays a role of glutathione peroxidase in platelets in the arachidonic acid metabolism. Reduces hydroperoxy ester lipids formed by a 15-lipoxygenase that may play a role as down-regulator of the cellular 15-lipoxygenase pathway. Can also reduce small soluble hydroperoxides such as H2O2, cumene hydroperoxide and tert-butyl hydroperoxide. The chain is Phospholipid hydroperoxide glutathione peroxidase from Bos taurus (Bovine).